A 98-amino-acid polypeptide reads, in one-letter code: NADH-ubiquinone oxidoreductase chain 4L (98 aa).

3 helical membrane-spanning segments follow: residues 1 to 21 (MPPI…GLLM), 29 to 49 (SLLC…ILSL), and 61 to 81 (IILL…LVMI).

This sequence belongs to the complex I subunit 4L family. As to quaternary structure, core subunit of respiratory chain NADH dehydrogenase (Complex I) which is composed of 45 different subunits.

It is found in the mitochondrion inner membrane. The catalysed reaction is a ubiquinone + NADH + 5 H(+)(in) = a ubiquinol + NAD(+) + 4 H(+)(out). Its function is as follows. Core subunit of the mitochondrial membrane respiratory chain NADH dehydrogenase (Complex I) which catalyzes electron transfer from NADH through the respiratory chain, using ubiquinone as an electron acceptor. Part of the enzyme membrane arm which is embedded in the lipid bilayer and involved in proton translocation. This is NADH-ubiquinone oxidoreductase chain 4L (MT-ND4L) from Galeopterus variegatus (Malayan flying lemur).